The primary structure comprises 481 residues: UDP-N-acetylmuramoylalanine--D-glutamate ligase (481 aa).

108 to 114 (GTNGKTS) is a binding site for ATP.

The protein belongs to the MurCDEF family.

The protein localises to the cytoplasm. The enzyme catalyses UDP-N-acetyl-alpha-D-muramoyl-L-alanine + D-glutamate + ATP = UDP-N-acetyl-alpha-D-muramoyl-L-alanyl-D-glutamate + ADP + phosphate + H(+). Its pathway is cell wall biogenesis; peptidoglycan biosynthesis. Cell wall formation. Catalyzes the addition of glutamate to the nucleotide precursor UDP-N-acetylmuramoyl-L-alanine (UMA). This chain is UDP-N-acetylmuramoylalanine--D-glutamate ligase, found in Bifidobacterium longum (strain DJO10A).